Reading from the N-terminus, the 314-residue chain is Ribonuclease Z (314 aa).

Residues histidine 61, histidine 63, aspartate 65, histidine 66, histidine 137, aspartate 207, and histidine 263 each coordinate Zn(2+). The active-site Proton acceptor is the aspartate 65.

Belongs to the RNase Z family. As to quaternary structure, homodimer. Zn(2+) is required as a cofactor.

It catalyses the reaction Endonucleolytic cleavage of RNA, removing extra 3' nucleotides from tRNA precursor, generating 3' termini of tRNAs. A 3'-hydroxy group is left at the tRNA terminus and a 5'-phosphoryl group is left at the trailer molecule.. Its function is as follows. Zinc phosphodiesterase, which displays some tRNA 3'-processing endonuclease activity. Probably involved in tRNA maturation, by removing a 3'-trailer from precursor tRNA. The polypeptide is Ribonuclease Z (Thermococcus gammatolerans (strain DSM 15229 / JCM 11827 / EJ3)).